A 212-amino-acid polypeptide reads, in one-letter code: Nucleoside diphosphate kinase homolog 5 (212 aa).

Residues 13-145 (EKTLAIIKPD…EREIRFMFPE (133 aa)) form an NDK region.

Belongs to the NDK family. Component of the axonemal radial spoke complex 1 (RS1), at least composed of spoke head proteins RSPH1, RSPH3, RSPH9 and the cilia-specific component RSPH4A or sperm-specific component RSPH6A, spoke stalk proteins RSPH14, DNAJB13, DYDC1, ROPN1L and NME5, and the anchor protein IQUB. Interacts with IQUB. In terms of tissue distribution, specifically expressed in testis germinal cells.

Its subcellular location is the cell projection. The protein resides in the cilium. It is found in the cytoplasm. The protein localises to the cytoskeleton. It localises to the flagellum axoneme. Functions as part of axonemal radial spoke complexes that play an important part in the motility of sperm and cilia. Does not seem to have nucleoside diphosphate kinase (NDPK) activity. Confers protection from cell death by BAX and alters the cellular levels of several antioxidant enzymes including GPX5. May play a role in spermiogenesis by increasing the ability of late-stage spermatids to eliminate reactive oxygen species. Exhibits a 3'-5' exonuclease activity with a preference for single-stranded DNA, suggesting roles in DNA proofreading and repair. The protein is Nucleoside diphosphate kinase homolog 5 of Homo sapiens (Human).